Reading from the N-terminus, the 459-residue chain is Smoothelin-like protein 1 (459 aa).

Residues 1-27 are compositionally biased toward polar residues; it reads MEQTEGNSSEDGTTVSPTAGNLETPGS. Residues 1–314 are disordered; the sequence is MEQTEGNSSE…RPRGPRAQNR (314 aa). Composition is skewed to basic and acidic residues over residues 42–55, 75–105, 112–168, 185–211, and 221–232; these read SDKE…EHLC, DELK…KEDT, DTGK…KEDA, ADVK…KELV, and EQGKENESEERA. A coiled-coil region spans residues 124–154; that stretch reads NEVREKEEAMLASEKQKVDEKETNLESKEKS. The span at 260-283 shows a compositional bias: low complexity; the sequence is PESTGETSPSASESSPSEVPGSPT. Basic and acidic residues predominate over residues 287–300; the sequence is PSEKKKDRAPERRV. At Ser301 the chain carries Phosphoserine; by PKA and PKG. The region spanning 343-449 is the Calponin-homology (CH) domain; that stretch reads GGVKNMLLEW…YIQELYRSLV (107 aa). The calmodulin-binding stretch occupies residues 441–459; that stretch reads IQELYRSLVQKGLVKTKKK.

Belongs to the smoothelin family. Interacts with PPP1R12A. In terms of processing, maximal phosphorylation of Ser-301 correlates with maximal relaxation of aorta in response to acetylcholine. In terms of tissue distribution, widely expressed, with highest expression in skeletal muscles (at protein level). Within striated muscles, significantly more expressed in soleus muscle compared with plantaris muscle or white vastus (at protein level). 30-40% lower expression in females than in males (at protein level). Expressed in type 2a fibers, but not detected in fast twitch type 2b muscle white vastus nor in oxidative type I/b heart muscle (at protein level). Expressed within myometrial cells of the uterus, as well as in the endometrial layer. In the aorta, confined to smooth muscle cells. Not detected in endothelial cells.

The protein localises to the cytoplasm. The protein resides in the myofibril. It is found in the sarcomere. It localises to the i band. Its subcellular location is the m line. The protein localises to the nucleus. Its function is as follows. Plays a role in the regulation of contractile properties of both striated and smooth muscles. When unphosphorylated, may inhibit myosin dephosphorylation. Phosphorylation at Ser-301 reduces this inhibitory activity. This Mus musculus (Mouse) protein is Smoothelin-like protein 1 (Smtnl1).